We begin with the raw amino-acid sequence, 145 residues long: Cell division protein SepF (145 aa).

Residues 23–41 (PQEVSKTKDENAKPKHETP) are compositionally biased toward basic and acidic residues. A disordered region spans residues 23–42 (PQEVSKTKDENAKPKHETPK).

The protein belongs to the SepF family. Homodimer. Interacts with FtsZ.

The protein resides in the cytoplasm. Functionally, cell division protein that is part of the divisome complex and is recruited early to the Z-ring. Probably stimulates Z-ring formation, perhaps through the cross-linking of FtsZ protofilaments. Its function overlaps with FtsA. This chain is Cell division protein SepF, found in Caldicellulosiruptor bescii (strain ATCC BAA-1888 / DSM 6725 / KCTC 15123 / Z-1320) (Anaerocellum thermophilum).